The sequence spans 160 residues: Glutathione peroxidase homolog BsaA (160 aa).

Cys-35 is an active-site residue.

The protein belongs to the glutathione peroxidase family.

This chain is Glutathione peroxidase homolog BsaA (bsaA), found in Bacillus subtilis (strain 168).